The chain runs to 332 residues: Malate dehydrogenase 1, cytoplasmic (332 aa).

NAD(+) is bound by residues 16-17 and Asp-43; that span reads QI. Met-56 carries the post-translational modification Methionine sulfoxide. Gly-90 provides a ligand contact to NAD(+). At Met-97 the chain carries Methionine sulfoxide. Arg-99 is a binding site for oxaloacetate. Gln-113 is an NAD(+) binding site. Lys-119 is covalently cross-linked (Glycyl lysine isopeptide (Lys-Gly) (interchain with G-Cter in ubiquitin)). Residue Asn-132 coordinates NAD(+). Positions 132, 163, 188, and 243 each coordinate oxaloacetate. His-188 (proton acceptor) is an active-site residue.

The protein belongs to the LDH/MDH superfamily. MDH type 2 family. Forms a homodimer. Forms a disulfide-linked homodimer upon oxidation. Interacts with 14-3-3-like proteins GRF1 GRF3 and GRF8. Interacts with TRX1, TRX2, TRX3, TRX4 and TRX5. As to expression, expressed in rosette leaves.

It is found in the cytoplasm. The enzyme catalyses (S)-malate + NAD(+) = oxaloacetate + NADH + H(+). With respect to regulation, decreased activity upon treatment with hydrogen peroxide. Functionally, catalyzes a reversible NAD-dependent dehydrogenase reaction involved in central metabolism and redox homeostasis between organellar compartments. The protein is Malate dehydrogenase 1, cytoplasmic (MDH1) of Arabidopsis thaliana (Mouse-ear cress).